A 157-amino-acid chain; its full sequence is Small ribosomal subunit protein uS7 (157 aa).

It belongs to the universal ribosomal protein uS7 family. As to quaternary structure, part of the 30S ribosomal subunit. Contacts proteins S9 and S11.

Functionally, one of the primary rRNA binding proteins, it binds directly to 16S rRNA where it nucleates assembly of the head domain of the 30S subunit. Is located at the subunit interface close to the decoding center, probably blocks exit of the E-site tRNA. This Roseiflexus castenholzii (strain DSM 13941 / HLO8) protein is Small ribosomal subunit protein uS7.